Here is a 365-residue protein sequence, read N- to C-terminus: 7-methylxanthine methyltransferase PCS1 (365 aa).

Y19 lines the S-adenosyl-L-homocysteine pocket. T26 is a caffeine binding site. Residues C62, N67, D99, L100, S134, and F135 each coordinate S-adenosyl-L-homocysteine. Caffeine contacts are provided by Y152, H155, and W156. N173 serves as a coordination point for Mg(2+). H221 serves as a coordination point for caffeine. Residues D259, F261, and N262 each coordinate Mg(2+). F317 serves as a coordination point for caffeine.

Belongs to the methyltransferase superfamily. Type-7 methyltransferase family. Requires Mg(2+) as cofactor.

The enzyme catalyses 1,7-dimethylxanthine + S-adenosyl-L-methionine = caffeine + S-adenosyl-L-homocysteine + H(+). It carries out the reaction 7-methylxanthine + S-adenosyl-L-methionine = theobromine + S-adenosyl-L-homocysteine + H(+). The protein operates within alkaloid biosynthesis. Involved in the biosynthesis of caffeine. Catalyzes the conversion of 7-methylxanthine (7mX) to theobromine, and, to some extent, the conversion of paraxanthine to caffeine, but seems not able to convert theobromine to caffeine. This Camellia ptilophylla (Cocoa tea) protein is 7-methylxanthine methyltransferase PCS1.